Reading from the N-terminus, the 421-residue chain is Imidazolonepropionase (421 aa).

Fe(3+) is bound by residues histidine 81 and histidine 83. Zn(2+) is bound by residues histidine 81 and histidine 83. Residues arginine 90, tyrosine 153, and histidine 186 each coordinate 4-imidazolone-5-propanoate. Tyrosine 153 lines the N-formimidoyl-L-glutamate pocket. A Fe(3+)-binding site is contributed by histidine 251. Histidine 251 is a Zn(2+) binding site. Glutamate 254 provides a ligand contact to 4-imidazolone-5-propanoate. Residue aspartate 326 coordinates Fe(3+). Aspartate 326 lines the Zn(2+) pocket. 2 residues coordinate N-formimidoyl-L-glutamate: asparagine 328 and glycine 330. Serine 331 contacts 4-imidazolone-5-propanoate.

This sequence belongs to the metallo-dependent hydrolases superfamily. HutI family. Requires Zn(2+) as cofactor. Fe(3+) serves as cofactor.

It localises to the cytoplasm. The catalysed reaction is 4-imidazolone-5-propanoate + H2O = N-formimidoyl-L-glutamate. The protein operates within amino-acid degradation; L-histidine degradation into L-glutamate; N-formimidoyl-L-glutamate from L-histidine: step 3/3. In terms of biological role, catalyzes the hydrolytic cleavage of the carbon-nitrogen bond in imidazolone-5-propanoate to yield N-formimidoyl-L-glutamate. It is the third step in the universal histidine degradation pathway. The chain is Imidazolonepropionase from Streptococcus pyogenes serotype M4 (strain MGAS10750).